Here is a 130-residue protein sequence, read N- to C-terminus: Small ribosomal subunit protein uS8 (130 aa).

It belongs to the universal ribosomal protein uS8 family. In terms of assembly, part of the 30S ribosomal subunit.

Its function is as follows. One of the primary rRNA binding proteins, it binds directly to 16S rRNA central domain where it helps coordinate assembly of the platform of the 30S subunit. The sequence is that of Small ribosomal subunit protein uS8 from Methanothermobacter thermautotrophicus (strain ATCC 29096 / DSM 1053 / JCM 10044 / NBRC 100330 / Delta H) (Methanobacterium thermoautotrophicum).